Reading from the N-terminus, the 291-residue chain is Beta-lactamase CTX-M-8 (291 aa).

Positions 1 to 30 are cleaved as a signal peptide; the sequence is MMRHRVKRMMLMTTACISLLLGSAPLYAQA. Catalysis depends on Ser-73, which acts as the Nucleophile; acyl-ester intermediate. A beta-lactam is bound by residues Lys-76, Ser-133, Glu-169, and Ser-240.

The protein belongs to the class-A beta-lactamase family. Monomer.

Its subcellular location is the secreted. It catalyses the reaction a beta-lactam + H2O = a substituted beta-amino acid. With respect to regulation, inhibited by the beta-lactamase-blocking agents clavulanic acid, tazobactam and sulbactam; in the DH5alpha strain of E.coli. In terms of biological role, extended-spectrum beta-lactamase (ESBL) which confers resistance to penicillins, as well as first, third and fourth-generation cephalosporins. Has cefotaxime-hydrolyzing activity. Inactive against cephalosporin antibiotic, cefoxitin, and the carbapenem, imipenem. This is Beta-lactamase CTX-M-8 from Citrobacter amalonaticus.